The primary structure comprises 875 residues: Receptor-like protein 33 (875 aa).

Residues 1-23 form the signal peptide; that stretch reads MSLIPITFYFLFLFFSNFRGVFA. Topologically, residues 24 to 822 are extracellular; the sequence is VPNIHLCHFE…GESETLESEQ (799 aa). N-linked (GlcNAc...) asparagine glycosylation is found at N65, N103, N133, N146, and N181. 10 LRR repeats span residues 110–133, 134–157, 159–182, 183–205, 206–230, 231–254, 256–278, 280–302, 303–327, and 329–351; these read FHFLTTLDLSYNHLSGQISSSIGN, LSHLTTLDLSGNNFSGWIPSSLGN, FHLTSLHLYDNNFGGEIPSSLGNL, SYLTFLDLSTNNFVGEIPSSFGS, LNQLSILRLDNNKLSGNLPLEVINL, TKLSEISLSHNQFTGTLPPNITSL, ILESFSASGNNFVGTIPSSLFTI, SITLIFLDNNQLSGTLEFGNISS, PSNLLVLQLGGNNLRGPIPTSISRL, and NLRTLDLSHFNIQGQVDFNIFSH. N229 and N250 each carry an N-linked (GlcNAc...) asparagine glycan. N-linked (GlcNAc...) asparagine glycosylation occurs at N299. An LRR 11; degenerate repeat occupies 352–377; that stretch reads LKLLGNLYLSHSNTTTTIDLNAVLSC. N364, N395, and N411 each carry an N-linked (GlcNAc...) asparagine glycan. LRR repeat units lie at residues 378 to 401, 404 to 427, 428 to 451, 455 to 477, 479 to 502, 503 to 528, 530 to 549, 550 to 573, 575 to 596, 597 to 619, 620 to 643, 686 to 710, 711 to 734, 735 to 758, and 760 to 783; these read FKMLISLDLSGNHVLVTNKSSVSD, LGLIGSLNLSGCGITEFPDILRTQ, RQMRTLDISNNKIKGQVPSWLLLQ, MHISNNNFIGFERSTKLEKTVVP, PSMKHFFGSNNNFSGKIPSFICSL, RSLIILDLSNNNFSGAIPPCVGKFKS, LSDLNLRRNRLSGSLPKTII, KSLRSLDVSHNELEGKLPRSLIHF, TLEVLNVESNRINDTFPFWLSS, LKKLQVLVLRSNAFHGRIHKTRF, PKLRIIDISRNHFNGTLPSDCFVE, LKIYTALDFSGNKFEGEIPRSIGLL, KELHILNLSSNGFTGHIPSSMGNL, RELESLDVSRNKLSGEIPQELGNL, and YLAYMNFSHNQLVGQVPGGTQFRT. N-linked (GlcNAc...) asparagine glycosylation is found at N490 and N514. N587 carries an N-linked (GlcNAc...) asparagine glycan. N-linked (GlcNAc...) asparagine glycosylation occurs at N633. N-linked (GlcNAc...) asparagine glycosylation is found at N717, N757, and N765. A helical membrane pass occupies residues 823-843; sequence VLSWIAAAIGFTPGIVLGLTI. The Cytoplasmic portion of the chain corresponds to 844–875; it reads GHIVLSSKPRWFFKVLYINNSRRRRRTRSEKS.

The protein belongs to the RLP family.

It is found in the cell membrane. In Arabidopsis thaliana (Mouse-ear cress), this protein is Receptor-like protein 33.